Consider the following 475-residue polypeptide: Sulfate adenylyltransferase subunit 1 (475 aa).

The tr-type G domain occupies 25–239; the sequence is KSLLRFLTCG…EVLETVEIQR (215 aa). A G1 region spans residues 34–41; the sequence is GSVDDGKS. A GTP-binding site is contributed by 34 to 41; that stretch reads GSVDDGKS. Residues 92–96 form a G2 region; that stretch reads GITID. Residues 113–116 are G3; it reads DTPG. Residues 113-117 and 168-171 contribute to the GTP site; these read DTPGH and NKMD. Residues 168-171 are G4; it reads NKMD. Residues 206–208 are G5; sequence SAL.

It belongs to the TRAFAC class translation factor GTPase superfamily. Classic translation factor GTPase family. CysN/NodQ subfamily. In terms of assembly, heterodimer composed of CysD, the smaller subunit, and CysN.

It catalyses the reaction sulfate + ATP + H(+) = adenosine 5'-phosphosulfate + diphosphate. The protein operates within sulfur metabolism; hydrogen sulfide biosynthesis; sulfite from sulfate: step 1/3. With CysD forms the ATP sulfurylase (ATPS) that catalyzes the adenylation of sulfate producing adenosine 5'-phosphosulfate (APS) and diphosphate, the first enzymatic step in sulfur assimilation pathway. APS synthesis involves the formation of a high-energy phosphoric-sulfuric acid anhydride bond driven by GTP hydrolysis by CysN coupled to ATP hydrolysis by CysD. The protein is Sulfate adenylyltransferase subunit 1 of Escherichia coli O9:H4 (strain HS).